Here is a 194-residue protein sequence, read N- to C-terminus: Peptidyl-tRNA hydrolase (194 aa).

Tyrosine 17 contacts tRNA. The Proton acceptor role is filled by histidine 22. 3 residues coordinate tRNA: phenylalanine 68, asparagine 70, and asparagine 116.

It belongs to the PTH family. Monomer.

It is found in the cytoplasm. The enzyme catalyses an N-acyl-L-alpha-aminoacyl-tRNA + H2O = an N-acyl-L-amino acid + a tRNA + H(+). Functionally, hydrolyzes ribosome-free peptidyl-tRNAs (with 1 or more amino acids incorporated), which drop off the ribosome during protein synthesis, or as a result of ribosome stalling. In terms of biological role, catalyzes the release of premature peptidyl moieties from peptidyl-tRNA molecules trapped in stalled 50S ribosomal subunits, and thus maintains levels of free tRNAs and 50S ribosomes. The sequence is that of Peptidyl-tRNA hydrolase from Haemophilus ducreyi (strain 35000HP / ATCC 700724).